We begin with the raw amino-acid sequence, 366 residues long: Beta sliding clamp (366 aa).

The i stretch occupies residues 1 to 125; it reads MKFTVEREHL…FPNLDDWQSE (125 aa). The interval 126 to 253 is II; that stretch reads VEFTLPQATM…YRRVLPKNPD (128 aa). An III region spans residues 254–366; sequence KHLEAGCDLL…AAYVVMPMRL (113 aa).

Belongs to the beta sliding clamp family. Forms a ring-shaped head-to-tail homodimer around DNA which binds and tethers DNA polymerases and other proteins to the DNA. The DNA replisome complex has a single clamp-loading complex (3 tau and 1 each of delta, delta', psi and chi subunits) which binds 3 Pol III cores (1 core on the leading strand and 2 on the lagging strand) each with a beta sliding clamp dimer. Additional proteins in the replisome are other copies of gamma, psi and chi, Ssb, DNA helicase and RNA primase.

Its subcellular location is the cytoplasm. Confers DNA tethering and processivity to DNA polymerases and other proteins. Acts as a clamp, forming a ring around DNA (a reaction catalyzed by the clamp-loading complex) which diffuses in an ATP-independent manner freely and bidirectionally along dsDNA. Initially characterized for its ability to contact the catalytic subunit of DNA polymerase III (Pol III), a complex, multichain enzyme responsible for most of the replicative synthesis in bacteria; Pol III exhibits 3'-5' exonuclease proofreading activity. The beta chain is required for initiation of replication as well as for processivity of DNA replication. This Escherichia coli O157:H7 protein is Beta sliding clamp (dnaN).